Consider the following 243-residue polypeptide: Protein IN2-1 homolog A (243 aa).

The 82-residue stretch at 31–112 folds into the GST N-terminal domain; sequence GTTRLYICYF…YIDSHFEGPA (82 aa). Glutathione is bound by residues lysine 70, valine 84, and 96–97; that span reads ES. The GST C-terminal domain maps to 117–240; the sequence is DPEKRQFADE…YLLDLAKTHL (124 aa).

It belongs to the GST superfamily. HSP26 family.

The sequence is that of Protein IN2-1 homolog A from Oryza sativa subsp. japonica (Rice).